The primary structure comprises 320 residues: Transaldolase (320 aa).

The active-site Schiff-base intermediate with substrate is Lys-135.

The protein belongs to the transaldolase family. Type 1 subfamily. As to quaternary structure, homodimer.

The protein resides in the cytoplasm. It carries out the reaction D-sedoheptulose 7-phosphate + D-glyceraldehyde 3-phosphate = D-erythrose 4-phosphate + beta-D-fructose 6-phosphate. It participates in carbohydrate degradation; pentose phosphate pathway; D-glyceraldehyde 3-phosphate and beta-D-fructose 6-phosphate from D-ribose 5-phosphate and D-xylulose 5-phosphate (non-oxidative stage): step 2/3. Transaldolase is important for the balance of metabolites in the pentose-phosphate pathway. The protein is Transaldolase of Colwellia psychrerythraea (strain 34H / ATCC BAA-681) (Vibrio psychroerythus).